The chain runs to 356 residues: Ubiquitin-conjugating enzyme E2 variant 3 (356 aa).

The disordered stretch occupies residues 1–83 (MSDQPGTSRP…LEDLHNYHRE (83 aa)). Over residues 18–32 (PTKTATRRRARPIAI) the composition is skewed to polar residues. Basic and acidic residues predominate over residues 63-76 (QPRKTVPKNVPLED). Residues 169-324 (DIITEFMNRS…AREFVMKMAG (156 aa)) enclose the UBC core domain.

This sequence belongs to the ubiquitin-conjugating enzyme family. May interact with pmk-3. In terms of tissue distribution, expressed ubiquitously.

The protein resides in the nucleus. The protein localises to the cytoplasm. Its subcellular location is the cell projection. It is found in the dendrite. It localises to the axon. The protein resides in the cilium. Functionally, possible negative regulator of polyubiquitination. May modulate the activity of the p38 MAP kinase pnk-3. May have a role in axon termination and synaptic transmission at motor and mechanosensory neurons. Plays a role in intraflagellar transport in cilia and cilium length regulation. This Caenorhabditis elegans protein is Ubiquitin-conjugating enzyme E2 variant 3.